The sequence spans 410 residues: Translation initiation factor 2 subunit gamma (410 aa).

The region spanning 6–203 (QSEVNIGMVG…AIQEFIPTPE (198 aa)) is the tr-type G domain. The tract at residues 15-22 (GHVDHGKT) is G1. The Mg(2+) site is built by D18, T22, G43, and S45. 18-23 (DHGKTS) contacts GTP. Residues 43-47 (GISIR) form a G2 region. Residues C58, C61, C73, and C76 each coordinate Zn(2+). Residues 90–93 (DAPG) form a G3 region. GTP-binding positions include 146–149 (NKID) and 181–183 (SAH). Positions 146 to 149 (NKID) are G4. A G5 region spans residues 181 to 183 (SAH).

Belongs to the TRAFAC class translation factor GTPase superfamily. Classic translation factor GTPase family. EIF2G subfamily. As to quaternary structure, heterotrimer composed of an alpha, a beta and a gamma chain. It depends on Mg(2+) as a cofactor.

The catalysed reaction is GTP + H2O = GDP + phosphate + H(+). In terms of biological role, eIF-2 functions in the early steps of protein synthesis by forming a ternary complex with GTP and initiator tRNA. This is Translation initiation factor 2 subunit gamma from Methanococcus maripaludis (strain C7 / ATCC BAA-1331).